The chain runs to 295 residues: Probable protein phosphatase 2C 5 (295 aa).

In terms of domain architecture, PPM-type phosphatase spans 23 to 294 (QYAATHMQGW…DNMTCILVLF (272 aa)). Residues Asp-57 and Gly-58 each contribute to the Mn(2+) site. Positions 151-170 (NRDGKPFDMSKDHKPDDDQE) are disordered. Mn(2+)-binding residues include Asp-237 and Asp-285.

This sequence belongs to the PP2C family. Mg(2+) is required as a cofactor. It depends on Mn(2+) as a cofactor.

The protein localises to the membrane. The enzyme catalyses O-phospho-L-seryl-[protein] + H2O = L-seryl-[protein] + phosphate. It catalyses the reaction O-phospho-L-threonyl-[protein] + H2O = L-threonyl-[protein] + phosphate. Functionally, enzyme with a broad specificity. This chain is Probable protein phosphatase 2C 5, found in Paramecium tetraurelia.